The sequence spans 162 residues: Translocator protein 2 (162 aa).

5 helical membrane passes run 3 to 23 (LQGPVFVGVPLLGPILICMLI), 44 to 64 (VILLVWVTIYSVMGYASYLVW), 79 to 99 (LGLYSFQLALSWTFLVLFLAA), 103 to 123 (GLALLDLLLLYGLVASLVFIW), and 129 to 149 (LAALLLLPYLAWLTVTTAITY).

Belongs to the TspO/BZRP family. As to quaternary structure, homotetramer. May also form homodimer. Expressed in liver, bone marrow and spleen. In spleen, detected in red pulp but not in white pulp.

The protein localises to the endoplasmic reticulum membrane. It is found in the cell membrane. Its function is as follows. Cholesterol-binding protein involved in the redistribution of cholesterol from lipid droplets to the endoplasmic reticulum. Required to meet cholesterol demands during erythropoietic differentiation. May play a role in transport processes at the plasma membrane of erythrocytes, including regulating VDAC-mediated ATP export, and import of the heme precursors protoporphyrin IX and 5-aminolevulinic acid. The polypeptide is Translocator protein 2 (Tspo2) (Mus musculus (Mouse)).